Here is a 294-residue protein sequence, read N- to C-terminus: Bifunctional protein FolD (294 aa).

NADP(+) is bound by residues 175 to 177 (GVS) and I243.

It belongs to the tetrahydrofolate dehydrogenase/cyclohydrolase family. Homodimer.

The enzyme catalyses (6R)-5,10-methylene-5,6,7,8-tetrahydrofolate + NADP(+) = (6R)-5,10-methenyltetrahydrofolate + NADPH. It catalyses the reaction (6R)-5,10-methenyltetrahydrofolate + H2O = (6R)-10-formyltetrahydrofolate + H(+). It functions in the pathway one-carbon metabolism; tetrahydrofolate interconversion. Functionally, catalyzes the oxidation of 5,10-methylenetetrahydrofolate to 5,10-methenyltetrahydrofolate and then the hydrolysis of 5,10-methenyltetrahydrofolate to 10-formyltetrahydrofolate. This Xanthomonas campestris pv. campestris (strain 8004) protein is Bifunctional protein FolD.